A 495-amino-acid chain; its full sequence is Putative BTB/POZ domain-containing protein L98 (495 aa).

Residues 15-85 enclose the BTB domain; it reads SDLTIEFVDN…FYGIETTNDY (71 aa).

It belongs to the mimivirus BTB/WD family.

The polypeptide is Putative BTB/POZ domain-containing protein L98 (Acanthamoeba polyphaga (Amoeba)).